We begin with the raw amino-acid sequence, 292 residues long: Syntaxin-19 (292 aa).

Residues 207 to 269 (LSEIEQRHKE…NNTKEKFGLA (63 aa)) form the t-SNARE coiled-coil homology domain.

Belongs to the syntaxin family. As to quaternary structure, interacts with EGFR. In terms of tissue distribution, expressed in stomach, lung and skin (at protein level). In stomach, strongly expressed in the mucosa of the fundus, in epithelial cells of gastric pits, and in gastric glands (at protein level). In skin, expressed in the epidermis, dermis, and epithelial layer of the hair bulb (at protein level).

The protein localises to the cell membrane. It is found in the cytoplasm. Functionally, plays a role in endosomal trafficking of the epidermal growth factor receptor (EGFR). The chain is Syntaxin-19 from Mus musculus (Mouse).